Reading from the N-terminus, the 151-residue chain is Large ribosomal subunit protein uL15 (151 aa).

Residues 1–58 (MTSISLDSLKPNKGARKRKTRKGRGIAAGQGASCGFGMRGQKSRSGRPTRPGFEGGQM) form a disordered region. The segment covering 13–24 (KGARKRKTRKGR) has biased composition (basic residues). Residues 26 to 38 (IAAGQGASCGFGM) show a composition bias toward gly residues.

The protein belongs to the universal ribosomal protein uL15 family. In terms of assembly, part of the 50S ribosomal subunit.

Binds to the 23S rRNA. The protein is Large ribosomal subunit protein uL15 of Prochlorococcus marinus (strain SARG / CCMP1375 / SS120).